The chain runs to 172 residues: Translation initiation factor IF-3 (172 aa).

It belongs to the IF-3 family. As to quaternary structure, monomer.

Its subcellular location is the cytoplasm. IF-3 binds to the 30S ribosomal subunit and shifts the equilibrium between 70S ribosomes and their 50S and 30S subunits in favor of the free subunits, thus enhancing the availability of 30S subunits on which protein synthesis initiation begins. In Thermotoga maritima (strain ATCC 43589 / DSM 3109 / JCM 10099 / NBRC 100826 / MSB8), this protein is Translation initiation factor IF-3.